The primary structure comprises 237 residues: Phosphatidylserine decarboxylase proenzyme (237 aa).

S206 acts as the Schiff-base intermediate with substrate; via pyruvic acid in catalysis. S206 is modified (pyruvic acid (Ser); by autocatalysis).

It belongs to the phosphatidylserine decarboxylase family. PSD-A subfamily. Heterodimer of a large membrane-associated beta subunit and a small pyruvoyl-containing alpha subunit. The cofactor is pyruvate. Is synthesized initially as an inactive proenzyme. Formation of the active enzyme involves a self-maturation process in which the active site pyruvoyl group is generated from an internal serine residue via an autocatalytic post-translational modification. Two non-identical subunits are generated from the proenzyme in this reaction, and the pyruvate is formed at the N-terminus of the alpha chain, which is derived from the carboxyl end of the proenzyme. The post-translation cleavage follows an unusual pathway, termed non-hydrolytic serinolysis, in which the side chain hydroxyl group of the serine supplies its oxygen atom to form the C-terminus of the beta chain, while the remainder of the serine residue undergoes an oxidative deamination to produce ammonia and the pyruvoyl prosthetic group on the alpha chain.

It is found in the cell membrane. It carries out the reaction a 1,2-diacyl-sn-glycero-3-phospho-L-serine + H(+) = a 1,2-diacyl-sn-glycero-3-phosphoethanolamine + CO2. It participates in phospholipid metabolism; phosphatidylethanolamine biosynthesis; phosphatidylethanolamine from CDP-diacylglycerol: step 2/2. Catalyzes the formation of phosphatidylethanolamine (PtdEtn) from phosphatidylserine (PtdSer). The protein is Phosphatidylserine decarboxylase proenzyme of Rhodococcus opacus (strain B4).